The following is a 588-amino-acid chain: A-type ATP synthase subunit A (588 aa).

An ATP-binding site is contributed by 237 to 244; that stretch reads GPFGSGKT.

The protein belongs to the ATPase alpha/beta chains family. In terms of assembly, has multiple subunits with at least A(3), B(3), C, D, E, F, H, I and proteolipid K(x).

The protein localises to the cell membrane. It carries out the reaction ATP + H2O + 4 H(+)(in) = ADP + phosphate + 5 H(+)(out). Component of the A-type ATP synthase that produces ATP from ADP in the presence of a proton gradient across the membrane. The A chain is the catalytic subunit. The protein is A-type ATP synthase subunit A of Methanoregula boonei (strain DSM 21154 / JCM 14090 / 6A8).